The sequence spans 576 residues: Septation ring formation regulator EzrA (576 aa).

Residues 1–7 (MSSTVII) lie on the Extracellular side of the membrane. The helical transmembrane segment at 8-26 (LIVVLLVILVAFYAFAILM) threads the bilayer. The Cytoplasmic segment spans residues 27–576 (RKKTEDRILA…FKNKPTPDYL (550 aa)). 2 coiled-coil regions span residues 105-134 (RARE…VAQL) and 277-301 (EQFE…LYAI).

The protein belongs to the EzrA family.

The protein resides in the cell membrane. Negative regulator of FtsZ ring formation; modulates the frequency and position of FtsZ ring formation. Inhibits FtsZ ring formation at polar sites. Interacts either with FtsZ or with one of its binding partners to promote depolymerization. The sequence is that of Septation ring formation regulator EzrA from Lactococcus lactis subsp. lactis (strain IL1403) (Streptococcus lactis).